Here is a 281-residue protein sequence, read N- to C-terminus: Pantothenate synthetase (281 aa).

30–37 (MGNLHQGH) lines the ATP pocket. The Proton donor role is filled by His37. Gln61 is a binding site for (R)-pantoate. Position 61 (Gln61) interacts with beta-alanine. 149–152 (GNKD) serves as a coordination point for ATP. Gln155 contributes to the (R)-pantoate binding site. Residues Ile178 and 186–189 (MSSR) each bind ATP.

Belongs to the pantothenate synthetase family. Homodimer.

The protein localises to the cytoplasm. The enzyme catalyses (R)-pantoate + beta-alanine + ATP = (R)-pantothenate + AMP + diphosphate + H(+). It functions in the pathway cofactor biosynthesis; (R)-pantothenate biosynthesis; (R)-pantothenate from (R)-pantoate and beta-alanine: step 1/1. Catalyzes the condensation of pantoate with beta-alanine in an ATP-dependent reaction via a pantoyl-adenylate intermediate. The sequence is that of Pantothenate synthetase from Shewanella sp. (strain MR-7).